Consider the following 362-residue polypeptide: Protein MGF 360-19R (362 aa).

An ANK repeat occupies 66–98; it reads LLNTALMKAVQDNNYELIKLFTEWGANINYGLI.

Belongs to the asfivirus MGF 360 family.

Plays a role in virus cell tropism, and may be required for efficient virus replication in macrophages. The sequence is that of Protein MGF 360-19R from Ornithodoros (relapsing fever ticks).